The primary structure comprises 126 residues: MGKDKNPRRVADNEAMAKVRMLRTSPQKLNLVAQMIRGKKVDKALTDLTFSNKRIAQDVKKCLQSAIANAENNHNLDVDELIVAEAWVGKNLTMKRGRPRARGRFGKILKPFAEITIKVRQVEEQA.

This sequence belongs to the universal ribosomal protein uL22 family. Part of the 50S ribosomal subunit.

Functionally, this protein binds specifically to 23S rRNA; its binding is stimulated by other ribosomal proteins, e.g. L4, L17, and L20. It is important during the early stages of 50S assembly. It makes multiple contacts with different domains of the 23S rRNA in the assembled 50S subunit and ribosome. The globular domain of the protein is located near the polypeptide exit tunnel on the outside of the subunit, while an extended beta-hairpin is found that lines the wall of the exit tunnel in the center of the 70S ribosome. This is Large ribosomal subunit protein uL22 from Ruegeria sp. (strain TM1040) (Silicibacter sp.).